A 5233-amino-acid chain; its full sequence is E3 ubiquitin-protein ligase highwire (5233 aa).

A disordered region spans residues 197-230; the sequence is VVGGPGLPAEKRPRRDSANSDADSDTEEPTEREP. The segment covering 205 to 214 has biased composition (basic and acidic residues); the sequence is AEKRPRRDSA. 2 positions are modified to phosphoserine: serine 213 and serine 216. RCC1 repeat units follow at residues 615–666, 669–724, and 768–818; these read NGRV…ALLV, DGTV…FVTK, and KGQL…DKRL. The segment at 680 to 700 is disordered; it reads RGEDGDSSKNRRQPKAVKPKK. The segment covering 689–700 has biased composition (basic residues); that stretch reads NRRQPKAVKPKK. Residues 900–950 form a disordered region; that stretch reads TELKPPPSDVQQRQQRSKTLIMRRKERKGELETGAAGGGAATPTDLDKDPP. Residues 908 to 917 are compositionally biased toward polar residues; that stretch reads DVQQRQQRSK. 3 RCC1 repeats span residues 931–983, 984–1033, and 1035–1084; these read ETGA…VLTL, AGEV…LLTS, and GMVY…TVAP. 2 disordered regions span residues 1051-1109 and 1287-1327; these read LPSD…EMPP and AAAA…PPQL. Residues 1092–1103 are compositionally biased toward polar residues; the sequence is RSQSPANVQPSG. A compositionally biased stretch (low complexity) spans 1287-1302; sequence AAAAAVAAPGTPVSAG. The tract at residues 1436 to 1587 is PHR domain 1; that stretch reads NRFDNFGGGW…GQIPAILYRL (152 aa). Residues 1681-1718 are disordered; that stretch reads SSTSVATGGGSNAAHGSGVVTTAKSVQSKPNKDKNTPR. The segment covering 1699–1709 has biased composition (polar residues); sequence VVTTAKSVQSK. The tract at residues 2014–2169 is PHR domain 2; it reads ARFARCDVSR…GQLPCILYYS (156 aa). Disordered stretches follow at residues 2329–2353 and 2580–2604; these read SADL…VPIN and NGAG…NTHQ. Positions 2336 to 2350 are enriched in low complexity; that stretch reads QSQSVSQSQSQSQSV. Residues 2885–4082 form a required for interaction with Rae1 region; the sequence is AEVSAPGPNL…FVSSLNPTGG (1198 aa). Residues 2906–3000 form a Filamin repeat; the sequence is WGGMAPPPRI…LEEVYRVDVK (95 aa). Disordered regions lie at residues 3005-3024, 3117-3210, 3277-3333, 3348-3378, 3551-3587, and 3901-3936; these read PPPT…SKLR, KGVG…EPEQ, GGQD…ASET, TTTG…PMGP, PRLL…DLGR, and ASLA…APPV. A compositionally biased stretch (basic and acidic residues) spans 3176 to 3191; it reads KHADLAEREAQVQEER. Positions 3192–3210 are enriched in acidic residues; that stretch reads EKEEEQVDDEDADDREPEQ. Residues 3282-3292 show a composition bias toward polar residues; that stretch reads PRGNGNRSQQE. The span at 3348–3371 shows a compositional bias: low complexity; that stretch reads TTTGQGEQQSELQLATTSTASSAS. A compositionally biased stretch (low complexity) spans 3917 to 3932; it reads QHHQQQQMNLQLQQHQ. The DOC domain occupies 4195–4374; the sequence is HNQVHSVATG…KHQPHLRLSH (180 aa). 2 disordered regions span residues 4633–4655 and 4680–4702; these read ASTG…GAVL and LRSR…ALPP. Residues 4638 to 4652 are compositionally biased toward gly residues; that stretch reads SGSGGVSGSSSGNGG. Zn(2+) contacts are provided by cysteine 4991, cysteine 4994, cysteine 5009, histidine 5011, histidine 5014, cysteine 5017, cysteine 5038, cysteine 5041, cysteine 5101, and cysteine 5104. The RING-type; atypical zinc finger occupies 4991 to 5042; that stretch reads CMICFVEALSCAPSIHLECGHVFHYHCCKAVLEKRWSGPRITFGFSLCPICK. The segment at 5096-5231 is tandem cysteine domain; the sequence is YAYYVCFKCQ…LGCGVCRNAQ (136 aa). Cysteine 5115 is a catalytic residue. The Zn(2+) site is built by cysteine 5130, cysteine 5133, cysteine 5142, histidine 5145, cysteine 5154, cysteine 5157, and cysteine 5158. Cysteine 5165 is an active-site residue. 7 residues coordinate Zn(2+): cysteine 5172, cysteine 5175, cysteine 5193, cysteine 5207, histidine 5213, cysteine 5224, and cysteine 5227.

It belongs to the RING-Cys relay (RCR) family. Component of an E3 ubiquitin ligase complex composed of hiw, Rae1 and Fsn. Interacts with Rae1; the interaction with Rae1 may protect hiw from autophagy-mediated degradation. In terms of tissue distribution, express throughout the nervous system. Stage 13 embryos show expression in the central nervous system (CNS) at the longitudinal axon tracts around which the synaptic neuropil forms. Expression outside the CNS starts at stage 16 in presynaptic terminals at the periactive zone which surround the active zone. Expression at neuromuscular junctions (NMJ) and in the CNS is also seen in third instar larvae (at protein level).

The protein resides in the synapse. It localises to the cell projection. Its subcellular location is the axon. The catalysed reaction is [E2 ubiquitin-conjugating enzyme]-S-ubiquitinyl-L-cysteine + [acceptor protein]-L-threonine = [E2 ubiquitin-conjugating enzyme]-L-cysteine + [acceptor protein]-3-O-ubiquitinyl-L-threonine.. It functions in the pathway protein modification; protein ubiquitination. Its function is as follows. Atypical E3 ubiquitin-protein ligase which specifically mediates ubiquitination of threonine and serine residues on target proteins, instead of ubiquitinating lysine residues. Shows esterification activity towards both threonine and serine, with a preference for threonine, and acts via two essential catalytic cysteine residues that relay ubiquitin to its substrate via thioester intermediates. Required in the presynaptic motoneuron to down-regulate the levels of wnd and restrain synaptic terminal growth at the neuromuscular junction (NMJ) together with Rae1 and Fsn. The chain is E3 ubiquitin-protein ligase highwire from Drosophila melanogaster (Fruit fly).